Reading from the N-terminus, the 1225-residue chain is DNA-directed RNA polymerase subunit beta' (1225 aa).

Residues cysteine 60, cysteine 62, cysteine 75, and cysteine 78 each contribute to the Zn(2+) site. The Mg(2+) site is built by aspartate 450, aspartate 452, and aspartate 454. Zn(2+) is bound by residues cysteine 818, cysteine 892, cysteine 899, and cysteine 902.

The protein belongs to the RNA polymerase beta' chain family. In terms of assembly, the RNAP catalytic core consists of 2 alpha, 1 beta, 1 beta' and 1 omega subunit. When a sigma factor is associated with the core the holoenzyme is formed, which can initiate transcription. The cofactor is Mg(2+). Zn(2+) is required as a cofactor.

The enzyme catalyses RNA(n) + a ribonucleoside 5'-triphosphate = RNA(n+1) + diphosphate. DNA-dependent RNA polymerase catalyzes the transcription of DNA into RNA using the four ribonucleoside triphosphates as substrates. The polypeptide is DNA-directed RNA polymerase subunit beta' (Streptococcus pneumoniae (strain ATCC BAA-255 / R6)).